Reading from the N-terminus, the 374-residue chain is Wnt inhibitory factor 1 (374 aa).

The N-terminal stretch at 1–28 is a signal peptide; that stretch reads MSLTGYFAAPLCSIFLFILAHADAGQQE. In terms of domain architecture, WIF spans 33-172; that stretch reads MWIDAHQARV…PQNAIFFKTC (140 aa). The N-linked (GlcNAc...) asparagine glycan is linked to asparagine 83. 7 cysteine pairs are disulfide-bonded: cysteine 135–cysteine 172, cysteine 177–cysteine 187, cysteine 181–cysteine 193, cysteine 195–cysteine 204, cysteine 209–cysteine 219, cysteine 213–cysteine 225, and cysteine 227–cysteine 236. EGF-like domains follow at residues 173–205, 208–237, 237–269, 270–301, and 302–333; these read QQAK…PHCE, LCMP…INCD, DKVN…EQCE, TSKC…DLCS, and KPVC…RYCN. Asparagine 240 carries N-linked (GlcNAc...) asparagine glycosylation. Disulfide bonds link cysteine 241-cysteine 251, cysteine 245-cysteine 257, cysteine 259-cysteine 268, cysteine 273-cysteine 283, cysteine 277-cysteine 289, cysteine 291-cysteine 300, cysteine 305-cysteine 315, cysteine 309-cysteine 321, and cysteine 323-cysteine 332. Positions 343 to 374 are disordered; the sequence is ALRPTGSRNRQHTPSPKRTEDRQALPESNYIW. Residues 348 to 358 show a composition bias toward polar residues; it reads GSRNRQHTPSP.

As to expression, during somatogenesis, expressed predominantly in unsegmented paraxial presomitic mesoderm and, to a much lesser extent, in newly segmented somites.

The protein localises to the secreted. Functionally, binds to WNT proteins and inhibits their activities. May be involved in mesoderm segmentation. The chain is Wnt inhibitory factor 1 (wif1) from Xenopus laevis (African clawed frog).